Here is a 192-residue protein sequence, read N- to C-terminus: Hydrogenase expression/formation protein HupD (192 aa).

Ni(2+) contacts are provided by Glu23, Asp69, and His100.

The protein belongs to the peptidase A31 family.

Its function is as follows. Not known. Could be involved in the processing of hydrogenase. This is Hydrogenase expression/formation protein HupD (hupD) from Bradyrhizobium diazoefficiens (strain JCM 10833 / BCRC 13528 / IAM 13628 / NBRC 14792 / USDA 110).